A 41-amino-acid polypeptide reads, in one-letter code: MKVKNSLRSLKQRHRDCRVVRRKGRVYVINKTQRRFKARQG.

This sequence belongs to the bacterial ribosomal protein bL36 family.

The sequence is that of Large ribosomal subunit protein bL36 from Dinoroseobacter shibae (strain DSM 16493 / NCIMB 14021 / DFL 12).